A 33-amino-acid chain; its full sequence is Pardaxin P-3 (33 aa).

Belongs to the pardaxin family. As to quaternary structure, in aqueous solution exists as a tetramer.

The protein resides in the secreted. The protein localises to the target cell membrane. Its function is as follows. Exhibits unusual shark repellent and surfactant properties. Forms voltage-dependent, ion-permeable channels in membranes. At high concentration causes cell membrane lysis. The protein is Pardaxin P-3 of Pardachirus pavoninus (Peacock sole).